A 354-amino-acid chain; its full sequence is Holliday junction branch migration complex subunit RuvB (354 aa).

Residues 1–183 (MTGDNLVSAY…FGFVAHLDFY (183 aa)) form a large ATPase domain (RuvB-L) region. ATP contacts are provided by residues arginine 23, glycine 64, lysine 67, threonine 68, serine 69, 130–132 (EDF), arginine 173, tyrosine 183, and arginine 220. Threonine 68 is a Mg(2+) binding site. The small ATPAse domain (RuvB-S) stretch occupies residues 184–254 (SPADLETLLN…TAQAALTVYD (71 aa)). The head domain (RuvB-H) stretch occupies residues 257-354 (ALGLDRLDRA…DLFSVEPDQP (98 aa)). 2 residues coordinate DNA: arginine 312 and arginine 317.

It belongs to the RuvB family. As to quaternary structure, homohexamer. Forms an RuvA(8)-RuvB(12)-Holliday junction (HJ) complex. HJ DNA is sandwiched between 2 RuvA tetramers; dsDNA enters through RuvA and exits via RuvB. An RuvB hexamer assembles on each DNA strand where it exits the tetramer. Each RuvB hexamer is contacted by two RuvA subunits (via domain III) on 2 adjacent RuvB subunits; this complex drives branch migration. In the full resolvosome a probable DNA-RuvA(4)-RuvB(12)-RuvC(2) complex forms which resolves the HJ.

It is found in the cytoplasm. The enzyme catalyses ATP + H2O = ADP + phosphate + H(+). Its function is as follows. The RuvA-RuvB-RuvC complex processes Holliday junction (HJ) DNA during genetic recombination and DNA repair, while the RuvA-RuvB complex plays an important role in the rescue of blocked DNA replication forks via replication fork reversal (RFR). RuvA specifically binds to HJ cruciform DNA, conferring on it an open structure. The RuvB hexamer acts as an ATP-dependent pump, pulling dsDNA into and through the RuvAB complex. RuvB forms 2 homohexamers on either side of HJ DNA bound by 1 or 2 RuvA tetramers; 4 subunits per hexamer contact DNA at a time. Coordinated motions by a converter formed by DNA-disengaged RuvB subunits stimulates ATP hydrolysis and nucleotide exchange. Immobilization of the converter enables RuvB to convert the ATP-contained energy into a lever motion, pulling 2 nucleotides of DNA out of the RuvA tetramer per ATP hydrolyzed, thus driving DNA branch migration. The RuvB motors rotate together with the DNA substrate, which together with the progressing nucleotide cycle form the mechanistic basis for DNA recombination by continuous HJ branch migration. Branch migration allows RuvC to scan DNA until it finds its consensus sequence, where it cleaves and resolves cruciform DNA. This Salinispora tropica (strain ATCC BAA-916 / DSM 44818 / JCM 13857 / NBRC 105044 / CNB-440) protein is Holliday junction branch migration complex subunit RuvB.